Consider the following 150-residue polypeptide: Ribosomal RNA large subunit methyltransferase H (150 aa).

Residues Ala-100 and 118-123 contribute to the S-adenosyl-L-methionine site; that span reads LSEMTF.

It belongs to the RNA methyltransferase RlmH family. In terms of assembly, homodimer.

It localises to the cytoplasm. The catalysed reaction is pseudouridine(1915) in 23S rRNA + S-adenosyl-L-methionine = N(3)-methylpseudouridine(1915) in 23S rRNA + S-adenosyl-L-homocysteine + H(+). In terms of biological role, specifically methylates the pseudouridine at position 1915 (m3Psi1915) in 23S rRNA. The chain is Ribosomal RNA large subunit methyltransferase H from Helicobacter pylori (strain J99 / ATCC 700824) (Campylobacter pylori J99).